A 432-amino-acid polypeptide reads, in one-letter code: Pachytene checkpoint protein 2 homolog (432 aa).

At Met-1 the chain carries N-acetylmethionine. 179–186 serves as a coordination point for ATP; it reads GPPGTGKT.

It belongs to the AAA ATPase family. PCH2 subfamily. In terms of assembly, specifically interacts with the ligand binding domain of the thyroid receptor (TR). This interaction does not require the presence of thyroid hormone for its interaction. Interacts with proteasome subunit PSMA8; to participate in meiosis progression during spermatogenesis.

Functionally, plays a key role in chromosome recombination and chromosome structure development during meiosis. Required at early steps in meiotic recombination that leads to non-crossovers pathways. Also needed for efficient completion of homologous synapsis by influencing crossover distribution along the chromosomes affecting both crossovers and non-crossovers pathways. Also required for development of higher-order chromosome structures and is needed for synaptonemal-complex formation. In males, required for efficient synapsis of the sex chromosomes and for sex body formation. Promotes early steps of the DNA double-strand breaks (DSBs) repair process upstream of the assembly of RAD51 complexes. Required for depletion of HORMAD1 and HORMAD2 from synapsed chromosomes. The protein is Pachytene checkpoint protein 2 homolog (TRIP13) of Canis lupus familiaris (Dog).